The primary structure comprises 357 residues: tRNA-specific 2-thiouridylase MnmA (357 aa).

Residues 6-13 (AMSGGVDS) and Leu32 each bind ATP. Catalysis depends on Cys101, which acts as the Nucleophile. Cys101 and Cys193 are oxidised to a cystine. Position 125 (Gly125) interacts with ATP. The interaction with tRNA stretch occupies residues 143–145 (KDQ). The active-site Cysteine persulfide intermediate is the Cys193.

It belongs to the MnmA/TRMU family.

It localises to the cytoplasm. The enzyme catalyses S-sulfanyl-L-cysteinyl-[protein] + uridine(34) in tRNA + AH2 + ATP = 2-thiouridine(34) in tRNA + L-cysteinyl-[protein] + A + AMP + diphosphate + H(+). Functionally, catalyzes the 2-thiolation of uridine at the wobble position (U34) of tRNA, leading to the formation of s(2)U34. The protein is tRNA-specific 2-thiouridylase MnmA of Mycolicibacterium gilvum (strain PYR-GCK) (Mycobacterium gilvum (strain PYR-GCK)).